We begin with the raw amino-acid sequence, 386 residues long: Succinate--CoA ligase [ADP-forming] subunit beta (386 aa).

The ATP-grasp domain maps to 9-244 (KDLLTSYQLP…PSQENIRDVL (236 aa)). Residues K46, 53–55 (GRG), V102, and E107 contribute to the ATP site. Positions 199 and 213 each coordinate Mg(2+). Residues N264 and 321–323 (GIM) contribute to the substrate site.

It belongs to the succinate/malate CoA ligase beta subunit family. Heterotetramer of two alpha and two beta subunits. It depends on Mg(2+) as a cofactor.

It catalyses the reaction succinate + ATP + CoA = succinyl-CoA + ADP + phosphate. The enzyme catalyses GTP + succinate + CoA = succinyl-CoA + GDP + phosphate. It functions in the pathway carbohydrate metabolism; tricarboxylic acid cycle; succinate from succinyl-CoA (ligase route): step 1/1. In terms of biological role, succinyl-CoA synthetase functions in the citric acid cycle (TCA), coupling the hydrolysis of succinyl-CoA to the synthesis of either ATP or GTP and thus represents the only step of substrate-level phosphorylation in the TCA. The beta subunit provides nucleotide specificity of the enzyme and binds the substrate succinate, while the binding sites for coenzyme A and phosphate are found in the alpha subunit. This is Succinate--CoA ligase [ADP-forming] subunit beta from Chlamydia muridarum (strain MoPn / Nigg).